Reading from the N-terminus, the 166-residue chain is Crossover junction endodeoxyribonuclease RuvC (166 aa).

Catalysis depends on residues aspartate 7, glutamate 68, and aspartate 141. The Mg(2+) site is built by aspartate 7, glutamate 68, and aspartate 141.

This sequence belongs to the RuvC family. As to quaternary structure, homodimer which binds Holliday junction (HJ) DNA. The HJ becomes 2-fold symmetrical on binding to RuvC with unstacked arms; it has a different conformation from HJ DNA in complex with RuvA. In the full resolvosome a probable DNA-RuvA(4)-RuvB(12)-RuvC(2) complex forms which resolves the HJ. The cofactor is Mg(2+).

The protein localises to the cytoplasm. It carries out the reaction Endonucleolytic cleavage at a junction such as a reciprocal single-stranded crossover between two homologous DNA duplexes (Holliday junction).. In terms of biological role, the RuvA-RuvB-RuvC complex processes Holliday junction (HJ) DNA during genetic recombination and DNA repair. Endonuclease that resolves HJ intermediates. Cleaves cruciform DNA by making single-stranded nicks across the HJ at symmetrical positions within the homologous arms, yielding a 5'-phosphate and a 3'-hydroxyl group; requires a central core of homology in the junction. The consensus cleavage sequence is 5'-(A/T)TT(C/G)-3'. Cleavage occurs on the 3'-side of the TT dinucleotide at the point of strand exchange. HJ branch migration catalyzed by RuvA-RuvB allows RuvC to scan DNA until it finds its consensus sequence, where it cleaves and resolves the cruciform DNA. The chain is Crossover junction endodeoxyribonuclease RuvC from Koribacter versatilis (strain Ellin345).